An 82-amino-acid chain; its full sequence is Probable glutamyl-tRNA(Gln) amidotransferase subunit C (82 aa).

The protein belongs to the GatC family. Heterotrimer of A, B and C subunits.

It carries out the reaction L-glutamyl-tRNA(Gln) + L-glutamine + ATP + H2O = L-glutaminyl-tRNA(Gln) + L-glutamate + ADP + phosphate + H(+). The enzyme catalyses L-aspartyl-tRNA(Asn) + L-glutamine + ATP + H2O = L-asparaginyl-tRNA(Asn) + L-glutamate + ADP + phosphate + 2 H(+). Functionally, allows the formation of correctly charged Asn-tRNA(Asn) or Gln-tRNA(Gln) through the transamidation of misacylated Asp-tRNA(Asn) or Glu-tRNA(Gln) in organisms which lack either or both of asparaginyl-tRNA or glutaminyl-tRNA synthetases. The reaction takes place in the presence of glutamine and ATP through an activated phospho-Asp-tRNA(Asn) or phospho-Glu-tRNA(Gln). The chain is Probable glutamyl-tRNA(Gln) amidotransferase subunit C from Methanocaldococcus jannaschii (strain ATCC 43067 / DSM 2661 / JAL-1 / JCM 10045 / NBRC 100440) (Methanococcus jannaschii).